A 587-amino-acid polypeptide reads, in one-letter code: MWYQSASLLGVAAVAQAATVHYSLDLTWETGSPNGVSREMIFVNGQFPGPAIILNEGDEAIIDVTNHLPFNTSIHFHGIEQKNTPWADGVVGLSQWAIQPGQSYTYQWRADTYGTYWYHAHDKAEIMDGLYGPVHIRPRPNRDSPFSMISDDPADIRAMKQAERNGKLVMLSDWDHLTGQEYMKAMEETGYDIFCSDSVLINGRGSVFCHDPEELTQMVPPPELAILNSSLTDKGCLPFVPPIQGNWEHHPDKVPPGLNEGCHPSTTQETIFTVDAAHQWASFHFISAASLKVLVVSIDEHPMYVYEVDGRYIEPQLAHSVKLYNGERYSVMVKLDKEPANYKMRAANDGGNQIVSGFATVTYEGGETSQRPSQPYIDYGSRNTSADVIPLDTNHLPPYPAISPASEPDDFHILMLGRTNSSWEWSLDGAAFLPSNLAALPPAILSPQAPEFADALKITTRNDTWVDIVFQLVVSETTPIQPPHPLHKHSNKGFLLGTGHGKFNWTSIKEAKEASPESFLETPVYRDTFTTSPQGETWTAIRYHVENPGPFLLHCHMTTHLQSGMGLILMDGVDVWPEVYADMITPM.

A signal peptide spans 1–17; the sequence is MWYQSASLLGVAAVAQA. Plastocyanin-like domains are found at residues 41-137 and 168-350; these read IFVN…VHIR and LVML…ANDG. N71 carries an N-linked (GlcNAc...) asparagine glycan. The Cu cation site is built by H75, H77, H119, and H121. 4 N-linked (GlcNAc...) asparagine glycosylation sites follow: N228, N383, N420, and N462. The Plastocyanin-like 3 domain occupies 397–577; the sequence is PPYPAISPAS…ILMDGVDVWP (181 aa). H487 contacts Cu cation. N504 carries N-linked (GlcNAc...) asparagine glycosylation.

It belongs to the multicopper oxidase family.

It localises to the cell surface. The protein operates within pigment biosynthesis; melanin biosynthesis. In terms of biological role, laccase; part of the gene cluster that mediates the biosynthesis of dihydroxynaphthalene (DHN)-melanin, a bluish-green pigment and a structural component of the conidial wall. The first step of the pathway is the production of the heptaketide naphtopyrone YWA1 by the polyketide synthase alb1 though condensation of acetyl-CoA with malonyl-CoA. The naphtopyrone YWA1 is then converted to the pentaketide 1,3,6,8-tetrahydroxynaphthalene (1,3,6,8-THN) by the heptaketide hydrolyase ayg1 though chain-length shortening. 1,3,6,8-THN is substrate of the hydroxynaphthalene reductase arp2 to yield scytalone. The scytalone dehydratase arp1 then reduces scytalone to 1,3,8-THN. 1,3,8-THN is also substrate of the hydroxynaphthalene reductase arp2 to yield vermelone. Vermelone is further converted by the multicopper oxidase abr1 to 1,8-DHN. Finally the laccase abr2 transforms 1,8-DHN to DHN-melanin. DHN-melanin biosynthesis appears to be initiated in endosomes where early enzymes (abl1, ayg1, arp1 and arp2) localize, with exocytosis leading to melanin deposition on the cell surface where late enzymes (abr1 and abr2) localize. DHN-melanin is an important structural component of the outer cell wall and is required for the presence of conidial surface hydrophobins. DHN-melanin also plays a crucial role in fungal virulence, including a protective role against the host's immune defenses. DHN-melanin also protects conidia against amoeba predation. This is Laccase abr2 from Aspergillus fumigatus (strain ATCC MYA-4609 / CBS 101355 / FGSC A1100 / Af293) (Neosartorya fumigata).